Consider the following 648-residue polypeptide: Replication restart protein PriA (648 aa).

A Helicase ATP-binding domain is found at 131–297; sequence TILNESNKPT…EIGKYQLVTL (167 aa). 144–151 lines the ATP pocket; sequence GVTGSGKT. A DEAH box motif is present at residues 240–243; sequence DEEH. The Zn(2+) site is built by cysteine 358, cysteine 361, cysteine 367, cysteine 370, cysteine 385, cysteine 388, cysteine 398, and cysteine 401. The 156-residue stretch at 393 to 548 folds into the Helicase C-terminal domain; sequence KIFSSCPECL…SFFANELEIR (156 aa).

It belongs to the helicase family. PriA subfamily. As to quaternary structure, component of the replication restart primosome. Requires Zn(2+) as cofactor.

The catalysed reaction is Couples ATP hydrolysis with the unwinding of duplex DNA by translocating in the 3'-5' direction.. The enzyme catalyses ATP + H2O = ADP + phosphate + H(+). In terms of biological role, initiates the restart of stalled replication forks, which reloads the replicative helicase on sites other than the origin of replication. Recognizes and binds to abandoned replication forks and remodels them to uncover a helicase loading site. Promotes assembly of the primosome at these replication forks. The sequence is that of Replication restart protein PriA from Rickettsia felis (strain ATCC VR-1525 / URRWXCal2) (Rickettsia azadi).